The following is a 959-amino-acid chain: rDNA transcriptional regulator pol5 (959 aa).

A phosphoserine mark is found at serine 742 and serine 743. Residues 936–959 (HQQTSTAASSPQKTGHHENEKTNH) are disordered. Polar residues predominate over residues 937 to 948 (QQTSTAASSPQK). The span at 950–959 (GHHENEKTNH) shows a compositional bias: basic and acidic residues.

Belongs to the MYBBP1A family. In terms of assembly, interacts with cdc10.

Its subcellular location is the nucleus. Plays an important role in the regulation of rRNA transcription. Binds to rDNA promoter fragments. This is rDNA transcriptional regulator pol5 (pol5) from Schizosaccharomyces pombe (strain 972 / ATCC 24843) (Fission yeast).